The sequence spans 435 residues: 5-methylthioadenosine/S-adenosylhomocysteine deaminase (435 aa).

Zn(2+)-binding residues include histidine 65 and histidine 67. Residues glutamate 94, arginine 150, and histidine 189 each contribute to the substrate site. Histidine 216 is a binding site for Zn(2+). Residues glutamate 219 and aspartate 304 each contribute to the substrate site. Aspartate 304 is a binding site for Zn(2+).

It belongs to the metallo-dependent hydrolases superfamily. MTA/SAH deaminase family. Zn(2+) is required as a cofactor.

It carries out the reaction S-adenosyl-L-homocysteine + H2O + H(+) = S-inosyl-L-homocysteine + NH4(+). It catalyses the reaction S-methyl-5'-thioadenosine + H2O + H(+) = S-methyl-5'-thioinosine + NH4(+). In terms of biological role, catalyzes the deamination of 5-methylthioadenosine and S-adenosyl-L-homocysteine into 5-methylthioinosine and S-inosyl-L-homocysteine, respectively. Is also able to deaminate adenosine. This Bacillus anthracis (strain A0248) protein is 5-methylthioadenosine/S-adenosylhomocysteine deaminase.